The following is a 168-amino-acid chain: Small ribosomal subunit protein bS16 (168 aa).

A disordered region spans residues 110 to 168 (LSEANNGPTAEAITEKKKKAREEKEAKEAAEKAAAEKAAAAEAEASEEAPAEEAASEEA). The span at 129-144 (AREEKEAKEAAEKAAA) shows a compositional bias: basic and acidic residues. Over residues 153–168 (EASEEAPAEEAASEEA) the composition is skewed to acidic residues.

Belongs to the bacterial ribosomal protein bS16 family.

This is Small ribosomal subunit protein bS16 from Corynebacterium efficiens (strain DSM 44549 / YS-314 / AJ 12310 / JCM 11189 / NBRC 100395).